The primary structure comprises 341 residues: DNA repair protein XRCC3 (341 aa).

Met-1 carries the post-translational modification N-acetylmethionine. Residue 107-114 (GRSSAGKT) participates in ATP binding.

This sequence belongs to the RecA family. RAD51 subfamily. As to quaternary structure, interacts with RAD51C and RAD51. Part of the CX3 complex consisting of RAD51C and XRCC3; the complex has a ring-like structure arranged into a flat disc around a central channel; CX3 can interact with RAD51 in vitro. Forms a complex with FANCD2, BRCA2 and phosphorylated FANCG. Interacts with SWSAP1 and ZSWIM7; involved in homologous recombination repair. Interacts directly with PALB2 which may serve as a scaffold for a HR complex containing PALB2, BRCA2, RAD51C, RAD51 and XRCC3.

It is found in the nucleus. It localises to the cytoplasm. Its subcellular location is the perinuclear region. The protein resides in the mitochondrion matrix. Involved in the homologous recombination repair (HRR) pathway of double-stranded DNA, thought to repair chromosomal fragmentation, translocations and deletions. Part of the RAD21 paralog protein complex CX3 which acts in the BRCA1-BRCA2-dependent HR pathway. Upon DNA damage, CX3 acts downstream of RAD51 recruitment; the complex binds predominantly to the intersection of the four duplex arms of the Holliday junction (HJ) and to junctions of replication forks. Involved in HJ resolution and thus in processing HR intermediates late in the DNA repair process; the function may be linked to the CX3 complex and seems to involve GEN1 during mitotic cell cycle progression. Part of a PALB2-scaffolded HR complex containing BRCA2 and RAD51C and which is thought to play a role in DNA repair by HR. Plays a role in regulating mitochondrial DNA copy number under conditions of oxidative stress in the presence of RAD51 and RAD51C. This chain is DNA repair protein XRCC3 (XRCC3), found in Bos taurus (Bovine).